A 206-amino-acid polypeptide reads, in one-letter code: A-type ATP synthase subunit D (206 aa).

The protein belongs to the V-ATPase D subunit family. Has multiple subunits with at least A(3), B(3), C, D, E, F, H, I and proteolipid K(x).

The protein localises to the cell membrane. In terms of biological role, component of the A-type ATP synthase that produces ATP from ADP in the presence of a proton gradient across the membrane. In Methanococcoides burtonii (strain DSM 6242 / NBRC 107633 / OCM 468 / ACE-M), this protein is A-type ATP synthase subunit D.